Consider the following 548-residue polypeptide: ATP synthase subunit alpha (548 aa).

172 to 179 contributes to the ATP binding site; it reads GDRKTGKT. The interval 526-548 is disordered; it reads AEAMDEADVEKESVKVRKPAPKK.

Belongs to the ATPase alpha/beta chains family. In terms of assembly, F-type ATPases have 2 components, CF(1) - the catalytic core - and CF(0) - the membrane proton channel. CF(1) has five subunits: alpha(3), beta(3), gamma(1), delta(1), epsilon(1). CF(0) has three main subunits: a(1), b(2) and c(9-12). The alpha and beta chains form an alternating ring which encloses part of the gamma chain. CF(1) is attached to CF(0) by a central stalk formed by the gamma and epsilon chains, while a peripheral stalk is formed by the delta and b chains.

Its subcellular location is the cell membrane. The enzyme catalyses ATP + H2O + 4 H(+)(in) = ADP + phosphate + 5 H(+)(out). In terms of biological role, produces ATP from ADP in the presence of a proton gradient across the membrane. The alpha chain is a regulatory subunit. This chain is ATP synthase subunit alpha, found in Mycolicibacterium vanbaalenii (strain DSM 7251 / JCM 13017 / BCRC 16820 / KCTC 9966 / NRRL B-24157 / PYR-1) (Mycobacterium vanbaalenii).